The primary structure comprises 474 residues: Glutathione synthetase (474 aa).

Ala2 carries the N-acetylalanine modification. Arg125 is a binding site for substrate. Glu144 lines the ATP pocket. Mg(2+)-binding residues include Glu144 and Asn146. Substrate contacts are provided by residues 148 to 151 (ISAS), 214 to 216 (ERN), Gln220, and 267 to 270 (RDGY). ATP is bound by residues Lys305, 364–373 (KPQREGGGNN), Tyr375, and 398–401 (MEKI). A Mg(2+)-binding site is contributed by Glu368. Ser415 is modified (phosphoserine). Position 425 (Glu425) interacts with ATP. Arg450 contacts substrate. Lys452 and Asp458 together coordinate ATP. Substrate is bound at residue 461–462 (VA).

This sequence belongs to the eukaryotic GSH synthase family. As to quaternary structure, homodimer. Mg(2+) serves as cofactor.

It carries out the reaction gamma-L-glutamyl-L-cysteine + glycine + ATP = glutathione + ADP + phosphate + H(+). The catalysed reaction is gamma-L-glutamyl-(2S)-2-aminobutanoate + glycine + ATP = ophthalmate + ADP + phosphate + H(+). Its pathway is sulfur metabolism; glutathione biosynthesis; glutathione from L-cysteine and L-glutamate: step 2/2. Functionally, catalyzes the production of glutathione from gamma-glutamylcysteine and glycine in an ATP-dependent manner. Glutathione (gamma-glutamylcysteinylglycine, GSH) is the most abundant intracellular thiol in living aerobic cells and is required for numerous processes including the protection of cells against oxidative damage, amino acid transport, the detoxification of foreign compounds, the maintenance of protein sulfhydryl groups in a reduced state and acts as a cofactor for a number of enzymes. Participates in ophthalmate biosynthesis in hepatocytes. The polypeptide is Glutathione synthetase (Rattus norvegicus (Rat)).